The chain runs to 67 residues: Penaeidin-4c (67 aa).

Positions 1–19 are cleaved as a signal peptide; sequence MRLVVCLVFLASFALVCQG. 3 disulfides stabilise this stretch: cysteine 42–cysteine 56, cysteine 45–cysteine 63, and cysteine 57–cysteine 64. Arginine amide is present on arginine 66.

Belongs to the penaeidin family.

The protein resides in the cytoplasmic granule. Antibacterial and antifungal activity. Presents chitin-binding activity. In Penaeus vannamei (Whiteleg shrimp), this protein is Penaeidin-4c.